We begin with the raw amino-acid sequence, 333 residues long: Complement C1q and tumor necrosis factor-related protein 9A (333 aa).

A signal peptide spans 1-19 (MRIWWLLLAIEICTGNINS). Collagen-like domains lie at 24-82 (RQGH…DGKV), 95-154 (GSPG…PGPM), and 155-191 (GPIGKPGPKGEAGPTGPQGEPGVRGIRGWKGDRGEKG). Residues 24–188 (RQGHPGIPGN…GIRGWKGDRG (165 aa)) form a disordered region. Residues 26-40 (GHPGIPGNPGHNGLP) are compositionally biased toward low complexity. A 4-hydroxyproline mark is found at proline 31, proline 34, and proline 40. Basic and acidic residues predominate over residues 42-57 (RDGRDGAKGDKGDAGE). Proline 58, proline 61, and proline 64 each carry 4-hydroxyproline. Residues 69–88 (TSGEKGERGADGKVEAKGIK) are compositionally biased toward basic and acidic residues. 5-hydroxylysine is present on residues lysine 73 and lysine 127. 2 O-linked (Gal...) hydroxylysine glycosylation sites follow: lysine 73 and lysine 127. Residues proline 151, proline 160, and proline 175 each carry the 4-hydroxyproline modification. The C1q domain occupies 197–333 (LVLPKSAFTV…FTGFLLFSSP (137 aa)).

Multimers (predominantly trimers). Interacts with ADIPOQ via the C1q domain to form a heterotrimeric complex. Interacts with CTRP9B. Forms heterotrimers and heterooligomeric complexes with CTRP9B. Expressed predominantly in adipose tissue.

It localises to the secreted. Probable adipokine. Activates AMPK, AKT, and p44/42 MAPK signaling pathways. The protein is Complement C1q and tumor necrosis factor-related protein 9A (C1QTNF9) of Homo sapiens (Human).